Reading from the N-terminus, the 95-residue chain is Small ribosomal subunit protein uS17 (95 aa).

It belongs to the universal ribosomal protein uS17 family. In terms of assembly, part of the 30S ribosomal subunit.

One of the primary rRNA binding proteins, it binds specifically to the 5'-end of 16S ribosomal RNA. This chain is Small ribosomal subunit protein uS17, found in Streptomyces coelicolor (strain ATCC BAA-471 / A3(2) / M145).